A 400-amino-acid chain; its full sequence is Large envelope protein (400 aa).

Met1 is modified (N-acetylmethionine). Disordered regions lie at residues 1–24 and 89–116; these read MGGWSSKPRKGMGTNLSVPNPLGF and PAMPPPASTNRQSGRQPTPISPPLRDSH. Gly2 carries the N-myristoyl glycine; by host lipid modification. The segment at 2–119 is pre-S1; sequence GGWSSKPRKG…PPLRDSHPQA (118 aa). The segment at 2–174 is pre-S; it reads GGWSSKPRKG…SSRIGDPAPN (173 aa). The Virion surface; in external conformation portion of the chain corresponds to 2–181; sequence GGWSSKPRKG…APNMENITSG (180 aa). The Intravirion; in internal conformation portion of the chain corresponds to 2–253; the sequence is GGWSSKPRKG…PGYRWMCLRR (252 aa). Trp4 is a glycosylation site (N-linked (GlcNAc...) asparagine). The span at 96–106 shows a compositional bias: polar residues; the sequence is STNRQSGRQPT. Residues 120–174 are pre-S2; that stretch reads MQWNSTAFHQALQDPRVRGLYFPAGGSSSGTLNPVPTIASHISSISSRIGDPAPN. The chain crosses the membrane as a helical span at residues 182 to 202; the sequence is FLGPLLVLQAGFFLLTRILTI. Over 203–253 the chain is Intravirion; in external conformation; sequence PQSLDSWWTSLNFLGGAPVCLGQNSQSPTSNHSPTSCPPICPGYRWMCLRR. The helical transmembrane segment at 254 to 274 threads the bilayer; that stretch reads FIIFLFILLLCLIFLLVLLDY. Residues 275–348 are Virion surface-facing; the sequence is QGMLPVCPLI…WASVRFSWLS (74 aa). Asn320 carries N-linked (GlcNAc...) asparagine; by host glycosylation. A helical transmembrane segment spans residues 349–369; it reads LLVPFVQWFVGLSPTVWLSAI. At 370–375 the chain is on the intravirion side; sequence WMMWYW. The chain crosses the membrane as a helical span at residues 376 to 398; the sequence is GPSLYNILSPFIPLLPIFFCLWV. Residues 399-400 are Virion surface-facing; sequence YI.

Belongs to the orthohepadnavirus major surface antigen family. As to quaternary structure, in its internal form (Li-HBsAg), interacts with the capsid protein and with the isoform S. Interacts with host chaperone CANX. In terms of assembly, associates with host chaperone CANX through its pre-S2 N glycan; this association may be essential for isoform M proper secretion. Interacts with isoform L. Interacts with the antigens of satellite virus HDV (HDVAgs); this interaction is required for encapsidation of HDV genomic RNA. Post-translationally, isoform M is N-terminally acetylated by host at a ratio of 90%, and N-glycosylated by host at the pre-S2 region. In terms of processing, myristoylated.

The protein localises to the virion membrane. Functionally, the large envelope protein exists in two topological conformations, one which is termed 'external' or Le-HBsAg and the other 'internal' or Li-HBsAg. In its external conformation the protein attaches the virus to cell receptors and thereby initiating infection. This interaction determines the species specificity and liver tropism. This attachment induces virion internalization predominantly through caveolin-mediated endocytosis. The large envelope protein also assures fusion between virion membrane and endosomal membrane. In its internal conformation the protein plays a role in virion morphogenesis and mediates the contact with the nucleocapsid like a matrix protein. In terms of biological role, the middle envelope protein plays an important role in the budding of the virion. It is involved in the induction of budding in a nucleocapsid independent way. In this process the majority of envelope proteins bud to form subviral lipoprotein particles of 22 nm of diameter that do not contain a nucleocapsid. This chain is Large envelope protein, found in Hepatitis B virus genotype A1 subtype adw (isolate Philippines/pFDW294/1988) (HBV-A).